The primary structure comprises 613 residues: Phostensin (613 aa).

Residues 15 to 33 are compositionally biased toward basic and acidic residues; it reads RRQEEASVRGREKAERERL. Disordered stretches follow at residues 15–231 and 266–505; these read RRQE…SAYQ and GEER…GKKR. Phosphoserine occurs at positions 54, 125, 133, 175, and 195. 2 stretches are compositionally biased toward basic and acidic residues: residues 104–154 and 167–191; these read RSEE…ERRL and LEAR…EPWK. Thr-199 carries the phosphothreonine modification. Basic and acidic residues predominate over residues 199–221; the sequence is TPERSLRLAESREQSPRRKEVES. Residue Ser-224 is modified to Phosphoserine. Residues 266–282 are compositionally biased toward basic and acidic residues; that stretch reads GEERQGYSEKCGRKEEW. Positions 301–310 are enriched in polar residues; sequence REAQGSSSTG. Basic and acidic residues-rich tracts occupy residues 314–327, 340–350, and 357–367; these read AEQR…RGMK, KAREWTPRDIE, and EPSESAEKRLE. A phosphoserine mark is found at Ser-368 and Ser-432. The span at 424–446 shows a compositional bias: pro residues; it reads QPPPPAPLSPPPPAPTAPQPPGD. Lys-457 bears the N6-acetyllysine mark. A compositionally biased stretch (low complexity) spans 476–499; that stretch reads PRRSVPPTTPATPTSPATADAAVP. Residues Ser-490 and Ser-530 each carry the phosphoserine modification. The disordered stretch occupies residues 552–594; it reads QYPSESSVLEELGPEPEVPSAPNPPAAQPDDEEDEEELLLLQP. Residues 567 to 578 show a composition bias toward pro residues; sequence PEVPSAPNPPAA. The span at 580–589 shows a compositional bias: acidic residues; it reads PDDEEDEEEL.

In terms of assembly, interacts with Protein phosphatase 1 (PP1).

Its subcellular location is the cytoplasm. The protein localises to the cytoskeleton. In terms of biological role, may target protein phosphatase 1 to F-actin cytoskeleton. This is Phostensin (PPP1R18) from Macaca mulatta (Rhesus macaque).